A 419-amino-acid chain; its full sequence is Imidazolonepropionase (419 aa).

Positions 84 and 86 each coordinate Fe(3+). Residues histidine 84 and histidine 86 each contribute to the Zn(2+) site. Residues arginine 93, tyrosine 156, and histidine 189 each contribute to the 4-imidazolone-5-propanoate site. Tyrosine 156 is a binding site for N-formimidoyl-L-glutamate. Residue histidine 254 participates in Fe(3+) binding. Histidine 254 serves as a coordination point for Zn(2+). Glutamine 257 lines the 4-imidazolone-5-propanoate pocket. Aspartate 329 serves as a coordination point for Fe(3+). Residue aspartate 329 participates in Zn(2+) binding. The N-formimidoyl-L-glutamate site is built by asparagine 331 and glycine 333. Position 334 (threonine 334) interacts with 4-imidazolone-5-propanoate.

This sequence belongs to the metallo-dependent hydrolases superfamily. HutI family. As to quaternary structure, monomer. Forms a tightly packed homodimer in the crystal, but this seems to be an artifact of crystallization. The cofactor is Zn(2+). Requires Fe(3+) as cofactor.

The protein localises to the cytoplasm. The catalysed reaction is 4-imidazolone-5-propanoate + H2O = N-formimidoyl-L-glutamate. The protein operates within amino-acid degradation; L-histidine degradation into L-glutamate; N-formimidoyl-L-glutamate from L-histidine: step 3/3. In terms of biological role, catalyzes the hydrolytic cleavage of the carbon-nitrogen bond in imidazolone-5-propanoate to yield N-formimidoyl-L-glutamate. It is the third step in the universal histidine degradation pathway. This chain is Imidazolonepropionase, found in Agrobacterium fabrum (strain C58 / ATCC 33970) (Agrobacterium tumefaciens (strain C58)).